The chain runs to 154 residues: SsrA-binding protein (154 aa).

The protein belongs to the SmpB family.

The protein resides in the cytoplasm. Functionally, required for rescue of stalled ribosomes mediated by trans-translation. Binds to transfer-messenger RNA (tmRNA), required for stable association of tmRNA with ribosomes. tmRNA and SmpB together mimic tRNA shape, replacing the anticodon stem-loop with SmpB. tmRNA is encoded by the ssrA gene; the 2 termini fold to resemble tRNA(Ala) and it encodes a 'tag peptide', a short internal open reading frame. During trans-translation Ala-aminoacylated tmRNA acts like a tRNA, entering the A-site of stalled ribosomes, displacing the stalled mRNA. The ribosome then switches to translate the ORF on the tmRNA; the nascent peptide is terminated with the 'tag peptide' encoded by the tmRNA and targeted for degradation. The ribosome is freed to recommence translation, which seems to be the essential function of trans-translation. The protein is SsrA-binding protein of Solidesulfovibrio magneticus (strain ATCC 700980 / DSM 13731 / RS-1) (Desulfovibrio magneticus).